We begin with the raw amino-acid sequence, 147 residues long: MSTYTPKAGDTTRSWYVIDATDVVLGRLAVEAAKLLRGKHKPTFTPNVDGGDFVIIINADKISLSGDKLTKKFAYSHSGYPGGLRKRAIGDLLAKHPTRVVENAITGMLPHTKLGRQIQKKLKVYAGPEHPHTAQQPVPFEIKQVAQ.

This sequence belongs to the universal ribosomal protein uL13 family. Part of the 50S ribosomal subunit.

This protein is one of the early assembly proteins of the 50S ribosomal subunit, although it is not seen to bind rRNA by itself. It is important during the early stages of 50S assembly. The chain is Large ribosomal subunit protein uL13 from Mycolicibacterium gilvum (strain PYR-GCK) (Mycobacterium gilvum (strain PYR-GCK)).